A 196-amino-acid polypeptide reads, in one-letter code: Probable molybdenum cofactor guanylyltransferase (196 aa).

GTP contacts are provided by residues 7-9, K19, D68, and D93; that span reads LAG. D93 provides a ligand contact to Mg(2+).

The protein belongs to the MobA family. It depends on Mg(2+) as a cofactor.

The protein resides in the cytoplasm. The catalysed reaction is Mo-molybdopterin + GTP + H(+) = Mo-molybdopterin guanine dinucleotide + diphosphate. Transfers a GMP moiety from GTP to Mo-molybdopterin (Mo-MPT) cofactor (Moco or molybdenum cofactor) to form Mo-molybdopterin guanine dinucleotide (Mo-MGD) cofactor. The polypeptide is Probable molybdenum cofactor guanylyltransferase (Pyrococcus furiosus (strain ATCC 43587 / DSM 3638 / JCM 8422 / Vc1)).